We begin with the raw amino-acid sequence, 396 residues long: Elongation factor Tu (396 aa).

The tr-type G domain occupies 10 to 206 (KPHINVGTIG…ALDSYIPEPQ (197 aa)). Residues 19-26 (GHVDHGKT) are G1. 19-26 (GHVDHGKT) serves as a coordination point for GTP. Mg(2+) is bound at residue Thr26. Residues 60–64 (GITIN) are G2. The G3 stretch occupies residues 81–84 (DCPG). GTP contacts are provided by residues 81-85 (DCPGH) and 136-139 (NKAD). The segment at 136–139 (NKAD) is G4. Residues 174-176 (SAL) form a G5 region.

This sequence belongs to the TRAFAC class translation factor GTPase superfamily. Classic translation factor GTPase family. EF-Tu/EF-1A subfamily. Monomer.

It is found in the cytoplasm. The enzyme catalyses GTP + H2O = GDP + phosphate + H(+). GTP hydrolase that promotes the GTP-dependent binding of aminoacyl-tRNA to the A-site of ribosomes during protein biosynthesis. This chain is Elongation factor Tu, found in Nitrosospira multiformis (strain ATCC 25196 / NCIMB 11849 / C 71).